The sequence spans 568 residues: Potassium-transporting ATPase potassium-binding subunit (568 aa).

The next 10 helical transmembrane spans lie at 3–23, 64–84, 133–153, 179–199, 255–275, 281–301, 375–395, 418–438, 497–517, and 535–555; these read TEIL…YPLG, FLKA…VLLV, FVIM…MAGV, ILLP…TPMG, MVEC…LGFY, LGYS…FINV, FGGV…AVFI, IATF…AISS, IVLI…AGLL, and VTFA…SFFP.

It belongs to the KdpA family. As to quaternary structure, the system is composed of three essential subunits: KdpA, KdpB and KdpC.

The protein localises to the cell inner membrane. Its function is as follows. Part of the high-affinity ATP-driven potassium transport (or Kdp) system, which catalyzes the hydrolysis of ATP coupled with the electrogenic transport of potassium into the cytoplasm. This subunit binds the periplasmic potassium ions and delivers the ions to the membrane domain of KdpB through an intramembrane tunnel. The chain is Potassium-transporting ATPase potassium-binding subunit from Bacteroides fragilis (strain ATCC 25285 / DSM 2151 / CCUG 4856 / JCM 11019 / LMG 10263 / NCTC 9343 / Onslow / VPI 2553 / EN-2).